A 107-amino-acid polypeptide reads, in one-letter code: Guanine nucleotide-binding protein G(I)/G(S)/G(O) subunit gamma-14 (107 aa).

In terms of domain architecture, G protein gamma spans 69–107 (KMAADLLKFCTEQAKNDPFLVGIPAATNSFKEKKPYAIL).

The protein belongs to the G protein gamma family. G proteins are composed of 3 units; alpha, beta and gamma.

The protein localises to the cell membrane. Its function is as follows. Guanine nucleotide-binding proteins (G proteins) are involved as a modulator or transducer in various transmembrane signaling systems. The beta and gamma chains are required for the GTPase activity, for replacement of GDP by GTP, and for G protein-effector interaction. The sequence is that of Guanine nucleotide-binding protein G(I)/G(S)/G(O) subunit gamma-14 from Homo sapiens (Human).